The chain runs to 131 residues: Profilin-6 (131 aa).

Cys-13 and Cys-115 are joined by a disulfide. The Involved in PIP2 interaction motif lies at 81-97 (AVIRGKKGSGGITVKKT). Thr-111 bears the Phosphothreonine mark.

It belongs to the profilin family. As to quaternary structure, occurs in many kinds of cells as a complex with monomeric actin in a 1:1 ratio. In terms of processing, phosphorylated by MAP kinases.

The protein localises to the cytoplasm. It is found in the cytoskeleton. Binds to actin and affects the structure of the cytoskeleton. At high concentrations, profilin prevents the polymerization of actin, whereas it enhances it at low concentrations. This chain is Profilin-6, found in Zea mays (Maize).